We begin with the raw amino-acid sequence, 512 residues long: Probable amidase At4g34880 (512 aa).

Residues Lys117 and Ser198 each act as charge relay system in the active site. The active-site Acyl-ester intermediate is Ser222.

It belongs to the amidase family. Expressed in vasculature of roots, cotyledons, leaves and sepals.

The catalysed reaction is a monocarboxylic acid amide + H2O = a monocarboxylate + NH4(+). The polypeptide is Probable amidase At4g34880 (Arabidopsis thaliana (Mouse-ear cress)).